The primary structure comprises 404 residues: Cysteine desulfurase IscS (404 aa).

Residues 75–76, Asn-155, Gln-183, and 203–205 contribute to the pyridoxal 5'-phosphate site; these read AT and SGH. The residue at position 206 (Lys-206) is an N6-(pyridoxal phosphate)lysine. Thr-243 lines the pyridoxal 5'-phosphate pocket. Cys-328 (cysteine persulfide intermediate) is an active-site residue. Cys-328 is a binding site for [2Fe-2S] cluster.

It belongs to the class-V pyridoxal-phosphate-dependent aminotransferase family. NifS/IscS subfamily. As to quaternary structure, homodimer. Forms a heterotetramer with IscU, interacts with other sulfur acceptors. The cofactor is pyridoxal 5'-phosphate.

It localises to the cytoplasm. It carries out the reaction (sulfur carrier)-H + L-cysteine = (sulfur carrier)-SH + L-alanine. It participates in cofactor biosynthesis; iron-sulfur cluster biosynthesis. In terms of biological role, master enzyme that delivers sulfur to a number of partners involved in Fe-S cluster assembly, tRNA modification or cofactor biosynthesis. Catalyzes the removal of elemental sulfur atoms from cysteine to produce alanine. Functions as a sulfur delivery protein for Fe-S cluster synthesis onto IscU, an Fe-S scaffold assembly protein, as well as other S acceptor proteins. In Shewanella pealeana (strain ATCC 700345 / ANG-SQ1), this protein is Cysteine desulfurase IscS.